An 87-amino-acid polypeptide reads, in one-letter code: Small ribosomal subunit protein bS20 (87 aa).

A disordered region spans residues 1 to 26 (MANIKSAKKRAIQSEKARKHNASRRS).

Belongs to the bacterial ribosomal protein bS20 family.

Binds directly to 16S ribosomal RNA. The protein is Small ribosomal subunit protein bS20 of Escherichia coli O17:K52:H18 (strain UMN026 / ExPEC).